A 244-amino-acid chain; its full sequence is Demethylmenaquinone methyltransferase (244 aa).

S-adenosyl-L-methionine is bound by residues T65, D86, and 114–115 (DA).

This sequence belongs to the class I-like SAM-binding methyltransferase superfamily. MenG/UbiE family.

The catalysed reaction is a 2-demethylmenaquinol + S-adenosyl-L-methionine = a menaquinol + S-adenosyl-L-homocysteine + H(+). The protein operates within quinol/quinone metabolism; menaquinone biosynthesis; menaquinol from 1,4-dihydroxy-2-naphthoate: step 2/2. In terms of biological role, methyltransferase required for the conversion of demethylmenaquinol (DMKH2) to menaquinol (MKH2). The protein is Demethylmenaquinone methyltransferase of Lactobacillus johnsonii (strain CNCM I-12250 / La1 / NCC 533).